Consider the following 149-residue polypeptide: IQ domain-containing protein F5 (149 aa).

IQ domains lie at 12 to 41 (ENKAIVSIQAWWRGTLVRRTLLHAALRAWI) and 68 to 97 (QEWAVVKLQSWVRMWCIRLRYLRLLHAVRI).

This chain is IQ domain-containing protein F5 (IQCF5), found in Bos taurus (Bovine).